The chain runs to 507 residues: Maturase K (507 aa).

Belongs to the intron maturase 2 family. MatK subfamily.

It is found in the plastid. Its subcellular location is the chloroplast. Usually encoded in the trnK tRNA gene intron. Probably assists in splicing its own and other chloroplast group II introns. This chain is Maturase K, found in Kalmia buxifolia (Sand myrtle).